A 300-amino-acid chain; its full sequence is Zinc finger CCCH domain-containing protein 14 (300 aa).

Positions 1–38 are disordered; sequence MEVGGRKRGKPDGANGAGGKRARESESFQTGVGSKSKP. 2 C3H1-type zinc fingers span residues 33-61 and 99-127; these read GSKS…HHFP and TVKT…HGER. In terms of domain architecture, KH spans 170-234; it reads SATAKISVDA…DQIKNASAMV (65 aa). Residues 243-262 form a disordered region; the sequence is GGAPPQGKKPVGGSHRGGGP. A C3H1-type 3 zinc finger spans residues 265 to 292; the sequence is NFKTKLCENFTKGSCTFGDRCHFAHGEN.

The chain is Zinc finger CCCH domain-containing protein 14 from Oryza sativa subsp. japonica (Rice).